The primary structure comprises 107 residues: MFSKLAIFATAAFAVLAAATPVRRQQCTTGQLQCCESTSTANDPATSELLGLIGVVISDVDALVGLTCSPISVIGVGSGSACTANPVCCDSSPIGGLVSIGCVPVNV.

The first 24 residues, 1–24, serve as a signal peptide directing secretion; that stretch reads MFSKLAIFATAAFAVLAAATPVRR. Disulfide bonds link cysteine 27–cysteine 88, cysteine 34–cysteine 82, cysteine 35–cysteine 68, and cysteine 89–cysteine 102.

This sequence belongs to the fungal hydrophobin family. Self-assembles to form functional amyloid fibrils called rodlets with a length range 100-150 nm. Self-assembly into fibrillar rodlets occurs spontaneously at hydrophobic:hydrophilic interfaces and the rodlets further associate laterally to form amphipathic monolayers. As to expression, only weekly expressed in hyphae cultured in liquid medium.

The protein resides in the secreted. It is found in the cell wall. Its function is as follows. Aerial growth, conidiation, and dispersal of filamentous fungi in the environment rely upon a capability of their secreting small amphipathic proteins called hydrophobins (HPBs) with low sequence identity. Class I can self-assemble into an outermost layer of rodlet bundles on aerial cell surfaces, conferring cellular hydrophobicity that supports fungal growth, development and dispersal; whereas Class II form highly ordered films at water-air interfaces through intermolecular interactions but contribute nothing to the rodlet structure. HgfI is a class I hydrophobin that is involved in cell surface hydrophobicity and lowers the surface tension of water and change the nature of the surfaces to which it adsorbs. The sequence is that of Class I hydrophobin hgfI from Grifola frondosa (Maitake).